Here is a 512-residue protein sequence, read N- to C-terminus: Ribose import ATP-binding protein RbsA 2 (512 aa).

2 consecutive ABC transporter domains span residues 22–258 (LEMR…VGRD) and 263–512 (FPKV…TGNA). Position 54–61 (54–61 (GENGAGKS)) interacts with ATP.

It belongs to the ABC transporter superfamily. Ribose importer (TC 3.A.1.2.1) family. The complex is composed of an ATP-binding protein (RbsA), two transmembrane proteins (RbsC) and a solute-binding protein (RbsB).

It is found in the cell inner membrane. The enzyme catalyses D-ribose(out) + ATP + H2O = D-ribose(in) + ADP + phosphate + H(+). In terms of biological role, part of the ABC transporter complex RbsABC involved in ribose import. Responsible for energy coupling to the transport system. This chain is Ribose import ATP-binding protein RbsA 2, found in Rhizobium johnstonii (strain DSM 114642 / LMG 32736 / 3841) (Rhizobium leguminosarum bv. viciae).